A 430-amino-acid chain; its full sequence is Glutamate-1-semialdehyde 2,1-aminomutase 2 (430 aa).

Lysine 268 bears the N6-(pyridoxal phosphate)lysine mark.

This sequence belongs to the class-III pyridoxal-phosphate-dependent aminotransferase family. HemL subfamily. Homodimer. Pyridoxal 5'-phosphate is required as a cofactor.

The protein localises to the cytoplasm. It catalyses the reaction (S)-4-amino-5-oxopentanoate = 5-aminolevulinate. It functions in the pathway porphyrin-containing compound metabolism; protoporphyrin-IX biosynthesis; 5-aminolevulinate from L-glutamyl-tRNA(Glu): step 2/2. This is Glutamate-1-semialdehyde 2,1-aminomutase 2 from Shouchella clausii (strain KSM-K16) (Alkalihalobacillus clausii).